A 714-amino-acid chain; its full sequence is Methylmalonyl-CoA mutase (714 aa).

Positions 584–714 (RPRILIAKMG…VLNLISQHHD (131 aa)) constitute a B12-binding domain. Histidine 597 contacts adenosylcob(III)alamin.

The protein belongs to the methylmalonyl-CoA mutase family. Homodimer. Interacts with ArgK. Requires adenosylcob(III)alamin as cofactor.

It carries out the reaction (R)-methylmalonyl-CoA = succinyl-CoA. In terms of biological role, catalyzes the interconversion of succinyl-CoA and methylmalonyl-CoA. Could be part of a pathway that converts succinate to propionate. The polypeptide is Methylmalonyl-CoA mutase (scpA) (Escherichia coli (strain K12)).